A 105-amino-acid polypeptide reads, in one-letter code: Pyrimidine/purine nucleoside phosphorylase (105 aa).

Belongs to the nucleoside phosphorylase PpnP family.

The catalysed reaction is a purine D-ribonucleoside + phosphate = a purine nucleobase + alpha-D-ribose 1-phosphate. The enzyme catalyses adenosine + phosphate = alpha-D-ribose 1-phosphate + adenine. It catalyses the reaction cytidine + phosphate = cytosine + alpha-D-ribose 1-phosphate. It carries out the reaction guanosine + phosphate = alpha-D-ribose 1-phosphate + guanine. The catalysed reaction is inosine + phosphate = alpha-D-ribose 1-phosphate + hypoxanthine. The enzyme catalyses thymidine + phosphate = 2-deoxy-alpha-D-ribose 1-phosphate + thymine. It catalyses the reaction uridine + phosphate = alpha-D-ribose 1-phosphate + uracil. It carries out the reaction xanthosine + phosphate = alpha-D-ribose 1-phosphate + xanthine. Catalyzes the phosphorolysis of diverse nucleosides, yielding D-ribose 1-phosphate and the respective free bases. Can use uridine, adenosine, guanosine, cytidine, thymidine, inosine and xanthosine as substrates. Also catalyzes the reverse reactions. In Ralstonia pickettii (strain 12J), this protein is Pyrimidine/purine nucleoside phosphorylase.